A 546-amino-acid chain; its full sequence is UDP-glycosyltransferase FPY2 (546 aa).

The N-terminal stretch at 1–20 (MSLPKAQILVVVTVGGSTNS) is a signal peptide. Residues 517-537 (LNNIDVALLFFILLGIISWIT) traverse the membrane as a helical segment.

This sequence belongs to the glycosyltransferase 28 family.

It localises to the membrane. It participates in secondary metabolite biosynthesis. Its function is as follows. UDP-glycosyltransferase; part of the gene cluster that mediates the biosynthesis of the gamma-pyrones fusapyrone (FPY) and deoxyfusapyrone (dFPY). FPY is an undecaketide and thus likely synthesized by the polyketide synthase FPY1 from acetyl-CoA functioning as starter unit and the addition of 10 malonyl-CoA extender units by successive Claisen-condensations. Next to this, FPY shares some rare features: C-glycosylated 4-deoxyglucose at C-3, a gem-dimethyl group at C-13, and an alpha-beta to beta-gamma double bond shift at C-20. During FPY biosynthesis mono-C-methyl groups are transferred to the tetra-, penta-, hexa- and heptaketide, while two C-methyl groups are transferred to the nonaketide, suggesting that the CMet domain is programmed to selectively catalyze two successive C-alpha-methylation reactions of the nonaketide, while other alpha-carbons are non- or mono-methylated only. While the origin of the 4'-deoxyglucose moiety remains opaque, its transfer to C-3 is most likely mediated by the C-glycosyltransferase FPY2. Next to this, the hydroxyl group present at C-33 and discriminating between FPY and dFPY, is likely to be installed by the cytochrome P450 monooxygenase FPY7. No putative function can be predicted for the remaining genes FPY3-FPY6. In Fusarium mangiferae (Mango malformation disease fungus), this protein is UDP-glycosyltransferase FPY2.